The following is a 396-amino-acid chain: Apolipoprotein A-IV (396 aa).

A signal peptide spans 1 to 20; it reads MFLKAVVLTLALVAVAGARA. Repeat copies occupy residues 33-54, 60-81, 82-103, 115-136, 137-158, 159-180, 181-202, 203-224, 225-246, 247-268, 269-286, 287-308, and 309-330. Residues 33-330 are 13 X 22 AA approximate tandem repeats; the sequence is DYFSQLSNNA…QMEQLRQKLG (298 aa). Residues 361-396 form a disordered region; that stretch reads KESQDKTLSLPELEQQQEQQQEQQQEQVQMLAPLES. Residues 374 to 389 are compositionally biased toward low complexity; it reads EQQQEQQQEQQQEQVQ.

This sequence belongs to the apolipoprotein A1/A4/E family. In terms of assembly, homodimer. In terms of processing, phosphorylation sites are present in the extracellular medium. In terms of tissue distribution, synthesized primarily in the intestine and secreted in plasma.

Its subcellular location is the secreted. Its function is as follows. May have a role in chylomicrons and VLDL secretion and catabolism. Required for efficient activation of lipoprotein lipase by ApoC-II; potent activator of LCAT. Apoa-IV is a major component of HDL and chylomicrons. The sequence is that of Apolipoprotein A-IV from Homo sapiens (Human).